Reading from the N-terminus, the 173-residue chain is Ribosome maturation factor RimM (173 aa).

In terms of domain architecture, PRC barrel spans 97-170 (EHEYYYHEII…RIRVHIMEGL (74 aa)).

The protein belongs to the RimM family. As to quaternary structure, binds ribosomal protein uS19.

The protein localises to the cytoplasm. Its function is as follows. An accessory protein needed during the final step in the assembly of 30S ribosomal subunit, possibly for assembly of the head region. Essential for efficient processing of 16S rRNA. May be needed both before and after RbfA during the maturation of 16S rRNA. It has affinity for free ribosomal 30S subunits but not for 70S ribosomes. The polypeptide is Ribosome maturation factor RimM (Shouchella clausii (strain KSM-K16) (Alkalihalobacillus clausii)).